Here is a 413-residue protein sequence, read N- to C-terminus: MQSLEVVEICAGAGGQALGLEKAGFSHRLAVELDVNAAATLRKNLKSDVVITGDVADPSVLNPMEHLGVSLLAGGVPCPPFSIAGKQLGADDMRDLFAWAVELCDVMKPRALMLENVRGLSMPRFAGYRQHVLDRLNDMGYVAEWRLLHASDFGVPQLRPRFVLVALQNKFAPYFTWPEPTGAAPTVGETLKDLMAADGWEGAEEWAAQANDIAPTIVGGSKKHGGADLGPTRAKRAWAELGVDAMGVADAPPQPGDKFKVGPKLTCEMVARIQGWRDGEWIFEGRKTSRYRQIGNAFPPPVAEAIGKRIRAALNMEGEGRDRAVDSDHNPLYRALKESGDFMTHRQLERAVGRPIEAYELERTISDLGRDFEVETKDGASAMAYKLGPFKAFTGQEGHLRHEMFVRHRTKIS.

One can recognise an SAM-dependent MTase C5-type domain in the interval 4-317 (LEVVEICAGA…KRIRAALNME (314 aa)). Cys78 is a catalytic residue.

The protein belongs to the class I-like SAM-binding methyltransferase superfamily. C5-methyltransferase family.

The enzyme catalyses a 2'-deoxycytidine in DNA + S-adenosyl-L-methionine = a 5-methyl-2'-deoxycytidine in DNA + S-adenosyl-L-homocysteine + H(+). In terms of biological role, a methylase that recognizes the double-stranded sequence 5'-GCCGGC-3', methylates C-? on both strands, and protects the DNA from cleavage by the NaeI endonuclease. The polypeptide is Type II methyltransferase M.NaeI (Lentzea aerocolonigenes (Lechevalieria aerocolonigenes)).